A 408-amino-acid polypeptide reads, in one-letter code: GTPase Obg (408 aa).

The Obg domain maps to M1–L159. The 175-residue stretch at A160–D334 folds into the OBG-type G domain. GTP contacts are provided by residues G166 to S173, F191 to Q195, D213 to G216, N284 to D287, and S315 to L317. The Mg(2+) site is built by S173 and T193. Residues A385 to R408 are disordered.

Belongs to the TRAFAC class OBG-HflX-like GTPase superfamily. OBG GTPase family. As to quaternary structure, monomer. It depends on Mg(2+) as a cofactor.

The protein resides in the cytoplasm. Its function is as follows. An essential GTPase which binds GTP, GDP and possibly (p)ppGpp with moderate affinity, with high nucleotide exchange rates and a fairly low GTP hydrolysis rate. Plays a role in control of the cell cycle, stress response, ribosome biogenesis and in those bacteria that undergo differentiation, in morphogenesis control. This chain is GTPase Obg, found in Azoarcus sp. (strain BH72).